The chain runs to 670 residues: Transcription factor vib-1 (670 aa).

The NDT80 DNA-binding region spans 106-341 (TEMVQDLRDD…RSPRNFQARK (236 aa)). Composition is skewed to polar residues over residues 394–438 (FTSA…TTSM) and 553–568 (LGNSSSDISPQSQHHP). Disordered stretches follow at residues 394–457 (FTSA…SYTA) and 496–670 (SAPP…WNAT). The segment covering 592–605 (ASAPASAPTSAAPP) has biased composition (low complexity). Over residues 611 to 631 (PSQSWTSTAGEGQTSSYTNGG) the composition is skewed to polar residues.

Its subcellular location is the nucleus. The protein resides in the cytoplasm. In terms of biological role, transcription factor that acts as a positive regulator of nonrepressible acid phosphatase activity. Is a major regulator of responses to nitrogen and carbon starvation and is essential for the expression of genes involved in vegetative incompatibility (like pin-c, het-6, and tol). Vegetative incompatibility is a non-self-recognition system ubiquitous in filamentous fungi which results in programmed cell death. The protein is Transcription factor vib-1 (vib-1) of Neurospora crassa (strain ATCC 24698 / 74-OR23-1A / CBS 708.71 / DSM 1257 / FGSC 987).